Here is a 100-residue protein sequence, read N- to C-terminus: NADH-quinone oxidoreductase subunit K (100 aa).

Helical transmembrane passes span 4–24, 28–48, and 60–80; these read LFHGLFLSLILFILGLTSLIV, ILFILISLEIMMNAVGLALIV, and IMYIFVITLAASEASIALALL.

This sequence belongs to the complex I subunit 4L family. NDH-1 is composed of 13 different subunits. Subunits NuoA, H, J, K, L, M, N constitute the membrane sector of the complex.

It is found in the cell membrane. It carries out the reaction a quinone + NADH + 5 H(+)(in) = a quinol + NAD(+) + 4 H(+)(out). Functionally, NDH-1 shuttles electrons from NADH, via FMN and iron-sulfur (Fe-S) centers, to quinones in the respiratory chain. The immediate electron acceptor for the enzyme in this species is believed to be ubiquinone. Couples the redox reaction to proton translocation (for every two electrons transferred, four hydrogen ions are translocated across the cytoplasmic membrane), and thus conserves the redox energy in a proton gradient. In Buchnera aphidicola subsp. Acyrthosiphon pisum (strain 5A), this protein is NADH-quinone oxidoreductase subunit K.